Here is a 622-residue protein sequence, read N- to C-terminus: Solute carrier family 2, facilitated glucose transporter member 12 (622 aa).

Residues 1–26 form a disordered region; it reads MVPVENTEGPNLLNQKGREAETEGSC. At 1–44 the chain is on the cytoplasmic side; that stretch reads MVPVENTEGPNLLNQKGREAETEGSCGASGGGHPACAGGPSMFT. The helical transmembrane segment at 45-65 threads the bilayer; it reads FLTSVTAAISGLLVGYELGLI. The Extracellular portion of the chain corresponds to 66 to 84; that stretch reads SGALLQIRTLLALTCHEQE. The chain crosses the membrane as a helical span at residues 85 to 105; sequence MVVSSLLIGAFLASLTGGVLI. The Cytoplasmic portion of the chain corresponds to 106 to 111; the sequence is DRYGRR. The chain crosses the membrane as a helical span at residues 112 to 132; the sequence is LAIILSSCLLGLGSLVLIMSL. Topologically, residues 133-141 are extracellular; that stretch reads SYTLLIMGR. A helical membrane pass occupies residues 142 to 162; it reads VAIGVSISLSSIATCVYIAEI. Residues 163–168 lie on the Cytoplasmic side of the membrane; that stretch reads APQHRR. A helical transmembrane segment spans residues 169 to 189; it reads GLLVSLNELMIVTGILFAYIS. Over 190–201 the chain is Extracellular; sequence NYAFANISNGWK. Asn195 carries N-linked (GlcNAc...) asparagine glycosylation. A helical membrane pass occupies residues 202–222; sequence YMFGLVIPLGVLQAIAMYFLP. The Cytoplasmic portion of the chain corresponds to 223–282; that stretch reads PSPRFLVMKGQEESAGKVLRKLRVISDTTEELTLIKSSLKDEYQYSFWDLFRSKDNMRTR. A helical membrane pass occupies residues 283-303; it reads ILIGLTLVFFVQTTGQPNILF. Over 304-321 the chain is Extracellular; sequence YASTVLKSVGFQSNEAAS. A helical membrane pass occupies residues 322 to 342; sequence LASTGVGVVKVVSTIPATLLV. Topologically, residues 343-349 are cytoplasmic; sequence DHIGSKT. The chain crosses the membrane as a helical span at residues 350-370; sequence FLCIGSSVMSASLLTMGIVNL. At 371–471 the chain is on the extracellular side; that stretch reads NINMNFTNIC…PAAYKWLSLA (101 aa). Asn375, Asn387, Asn400, and Asn405 each carry an N-linked (GlcNAc...) asparagine glycan. A helical transmembrane segment spans residues 472–492; sequence SLLVYVAAFSIGLGPMPWLVL. Residues 493-503 are Cytoplasmic-facing; sequence SEIFPGGIRGR. A helical membrane pass occupies residues 504–524; sequence AMALTSSMNWGVNLLISLTFL. At 525–533 the chain is on the extracellular side; it reads TVTDLIGLS. Residues 534–554 form a helical membrane-spanning segment; that stretch reads WVCFIYTIMSLASLAFVVLFI. Over 555-622 the chain is Cytoplasmic; sequence PETKGCSLEQ…GQSQRPSPDT (68 aa).

It belongs to the major facilitator superfamily. Sugar transporter (TC 2.A.1.1) family. Glucose transporter subfamily. As to expression, expressed in skeletal muscle, heart, brain, kidney, spleen, adipose tissues and to a lesser extent in small intestine and lung.

The protein localises to the cell membrane. It localises to the endomembrane system. It is found in the cytoplasm. The protein resides in the perinuclear region. It catalyses the reaction D-glucose(out) = D-glucose(in). Its function is as follows. Insulin-independent facilitative glucose transporter. This Mus musculus (Mouse) protein is Solute carrier family 2, facilitated glucose transporter member 12.